The following is a 746-amino-acid chain: Teichoic acid poly(glycerol phosphate) polymerase (746 aa).

Residues 473-477 (WHGTP), arginine 540, 573-574 (PT), 610-612 (RMH), 652-653 (SS), and aspartate 657 each bind CDP-glycerol.

Belongs to the CDP-glycerol glycerophosphotransferase family.

Its subcellular location is the cell membrane. It catalyses the reaction 4-O-[(2R)-glycerylphospho]-N-acetyl-beta-D-mannosaminyl-(1-&gt;4)-N-acetyl-alpha-D-glucosaminyl di-trans,octa-cis-undecaprenyl diphosphate + n CDP-glycerol = 4-O-{[(2R)-1-glycerylphospho](n)-(2R)-1-glycerylphospho}-N-acetyl-beta-D-mannosaminyl-(1-&gt;4)-N-acetyl-alpha-D-glucosaminyl undecaprenyl diphosphate + n CMP + n H(+). The protein operates within cell wall biogenesis; poly(glycerol phosphate) teichoic acid biosynthesis. In terms of biological role, responsible for the polymerization of the main chain of the major teichoic acid by sequential transfer of glycerol phosphate units from CDP-glycerol to the disaccharide linkage unit. Synthesizes polymers of approximately 35 glycerol phosphate units in length. This chain is Teichoic acid poly(glycerol phosphate) polymerase (tagF), found in Bacillus subtilis (strain 168).